A 136-amino-acid chain; its full sequence is Interleukin-13 (136 aa).

The N-terminal stretch at 1-18 (MALWLTVVIAFTCIGGLA) is a signal peptide. Asparagine 38, asparagine 49, asparagine 57, asparagine 72, asparagine 75, and asparagine 131 each carry an N-linked (GlcNAc...) asparagine glycan. Cystine bridges form between cysteine 48–cysteine 76 and cysteine 64–cysteine 90.

This sequence belongs to the IL-4/IL-13 family. In terms of assembly, interacts with IL13RA2.

Its subcellular location is the secreted. In terms of biological role, cytokine that plays important roles in allergic inflammation and immune response to parasite infection. Synergizes with IL2 in regulating interferon-gamma synthesis. Stimulates B-cell proliferation, and activation of eosinophils, basophils, and mast cells. Plays an important role in controlling IL33 activity by modulating the production of transmembrane and soluble forms of interleukin-1 receptor-like 1/IL1RL1. Displays the capacity to antagonize Th1-driven proinflammatory immune response and downregulates synthesis of many proinflammatory cytokines including IL1, IL6, IL10, IL12 and TNF-alpha through a mechanism that partially involves suppression of NF-kappa-B. Also functions on nonhematopoietic cells, including endothelial cells where it induces vascular cell adhesion protein 1/VCAM1, which is important in the recruitment of eosinophils. Exerts its biological effects through its receptors which comprises the IL4R chain and the IL13RA1 chain, to activate JAK1 and TYK2, leading to the activation of STAT6. Aside from IL13RA1, another receptor IL13RA2 acts as a high affinity decoy for IL13 and mediates internalization and depletion of extracellular IL13. This chain is Interleukin-13 (IL13), found in Camelus bactrianus (Bactrian camel).